An 89-amino-acid chain; its full sequence is Large ribosomal subunit protein bL27 (89 aa).

The segment at 1 to 21 (MAHKKAGGSSRNGRDSAGRRL) is disordered.

This sequence belongs to the bacterial ribosomal protein bL27 family.

The chain is Large ribosomal subunit protein bL27 from Roseobacter denitrificans (strain ATCC 33942 / OCh 114) (Erythrobacter sp. (strain OCh 114)).